Reading from the N-terminus, the 573-residue chain is Flagellin B (573 aa).

Belongs to the bacterial flagellin family. In terms of assembly, heteromer of FlaA and FlaB. A flagellar filament composed exclusively of FlaA is indistinguishable in length from that of the wild-type and shows a slight reduction in motility. The flagellar filament composed exclusively of the FlaB is severely truncated in length and greatly reduced in motility. Thus, while both flagellins are not necessary for motility, both are required for a fully active flagellar filament.

It is found in the secreted. Its subcellular location is the bacterial flagellum. In terms of biological role, flagellin is the subunit protein which polymerizes to form the filaments of bacterial flagella. The polypeptide is Flagellin B (flaB) (Campylobacter coli).